Consider the following 191-residue polypeptide: 3-isopropylmalate dehydratase small subunit (191 aa).

The protein belongs to the LeuD family. LeuD type 1 subfamily. As to quaternary structure, heterodimer of LeuC and LeuD.

The enzyme catalyses (2R,3S)-3-isopropylmalate = (2S)-2-isopropylmalate. The protein operates within amino-acid biosynthesis; L-leucine biosynthesis; L-leucine from 3-methyl-2-oxobutanoate: step 2/4. Functionally, catalyzes the isomerization between 2-isopropylmalate and 3-isopropylmalate, via the formation of 2-isopropylmaleate. This chain is 3-isopropylmalate dehydratase small subunit, found in Lactococcus lactis subsp. cremoris (strain MG1363).